The sequence spans 371 residues: Mitogen-activated protein kinase homolog NTF6 (371 aa).

The Protein kinase domain maps to 38–324 (IPPIQPVGRG…VEDALNHPFL (287 aa)). ATP contacts are provided by residues 44-52 (VGRGAYGMV) and K67. D164 (proton acceptor) is an active-site residue. T196 bears the Phosphothreonine mark. The TXY signature appears at 196–198 (TEY). Y198 carries the phosphotyrosine modification.

It belongs to the protein kinase superfamily. CMGC Ser/Thr protein kinase family. MAP kinase subfamily. Requires Mg(2+) as cofactor. In terms of processing, dually phosphorylated on Thr-196 and Tyr-198, which activates the enzyme. Very low autophosphorylation, although dramatically increased when Mn(2+) is added to the reaction instead of Mg(2+).

The enzyme catalyses L-seryl-[protein] + ATP = O-phospho-L-seryl-[protein] + ADP + H(+). It catalyses the reaction L-threonyl-[protein] + ATP = O-phospho-L-threonyl-[protein] + ADP + H(+). Its activity is regulated as follows. Activated by tyrosine and threonine phosphorylation. The polypeptide is Mitogen-activated protein kinase homolog NTF6 (NTF6) (Nicotiana tabacum (Common tobacco)).